We begin with the raw amino-acid sequence, 138 residues long: Large ribosomal subunit protein uL16 (138 aa).

It belongs to the universal ribosomal protein uL16 family. Part of the 50S ribosomal subunit.

In terms of biological role, binds 23S rRNA and is also seen to make contacts with the A and possibly P site tRNAs. This is Large ribosomal subunit protein uL16 from Neisseria gonorrhoeae (strain ATCC 700825 / FA 1090).